The primary structure comprises 231 residues: 7-cyano-7-deazaguanine synthase (231 aa).

Position 8 to 18 (8 to 18) interacts with ATP; sequence FSGGQDSTTCL. Residues C187, C196, C199, and C202 each coordinate Zn(2+).

This sequence belongs to the QueC family. Zn(2+) serves as cofactor.

The catalysed reaction is 7-carboxy-7-deazaguanine + NH4(+) + ATP = 7-cyano-7-deazaguanine + ADP + phosphate + H2O + H(+). Its pathway is purine metabolism; 7-cyano-7-deazaguanine biosynthesis. Its function is as follows. Catalyzes the ATP-dependent conversion of 7-carboxy-7-deazaguanine (CDG) to 7-cyano-7-deazaguanine (preQ(0)). This Vibrio vulnificus (strain CMCP6) protein is 7-cyano-7-deazaguanine synthase.